A 62-amino-acid polypeptide reads, in one-letter code: Large ribosomal subunit protein bL28 (62 aa).

This sequence belongs to the bacterial ribosomal protein bL28 family.

This is Large ribosomal subunit protein bL28 from Acidothermus cellulolyticus (strain ATCC 43068 / DSM 8971 / 11B).